A 648-amino-acid chain; its full sequence is Threonine--tRNA ligase (648 aa).

Positions 1–61 (MIDIILPDGS…INTATVKAIT (61 aa)) constitute a TGS domain. The tract at residues 243-549 (DHRKLGRELE…LIEHYSGRLP (307 aa)) is catalytic. Residues Cys-349, His-400, and His-526 each contribute to the Zn(2+) site.

The protein belongs to the class-II aminoacyl-tRNA synthetase family. As to quaternary structure, homodimer. Zn(2+) serves as cofactor.

It localises to the cytoplasm. It catalyses the reaction tRNA(Thr) + L-threonine + ATP = L-threonyl-tRNA(Thr) + AMP + diphosphate + H(+). Functionally, catalyzes the attachment of threonine to tRNA(Thr) in a two-step reaction: L-threonine is first activated by ATP to form Thr-AMP and then transferred to the acceptor end of tRNA(Thr). Also edits incorrectly charged L-seryl-tRNA(Thr). This chain is Threonine--tRNA ligase, found in Orientia tsutsugamushi (strain Boryong) (Rickettsia tsutsugamushi).